Consider the following 213-residue polypeptide: Cytochrome b6 (213 aa).

The chain crosses the membrane as a helical span at residues 30–50 (IFYCLGGLTLLAFLVQCVTGL). Cysteine 33 contributes to the heme c binding site. Heme b is bound by residues histidine 84 and histidine 98. The next 3 helical transmembrane spans lie at 88-108 (ANLM…TGSF), 114-134 (LNWL…FTGY), and 184-204 (LHVM…FIMI). Heme b contacts are provided by histidine 185 and histidine 200.

Belongs to the cytochrome b family. PetB subfamily. The subunits of the cytochrome bc complex are a Rieske Fe-S protein (PetC), cytochrome b6 (PetB), subunit IV (PetD), and a diheme cytochrome c (PetX). The cofactor is heme b. Heme c serves as cofactor.

It is found in the cell membrane. Its function is as follows. Component of the cytochrome bc complex which donates electrons to the photosynthetic reaction center. The protein is Cytochrome b6 of Heliobacterium mobile (Heliobacillus mobilis).